The chain runs to 67 residues: Sec-independent protein translocase protein TatA (67 aa).

Residues Met-1–Gly-21 form a helical membrane-spanning segment. The tract at residues Leu-43–Ala-67 is disordered. The span at Thr-47–Ala-67 shows a compositional bias: basic and acidic residues.

This sequence belongs to the TatA/E family. In terms of assembly, the Tat system comprises two distinct complexes: a TatABC complex, containing multiple copies of TatA, TatB and TatC subunits, and a separate TatA complex, containing only TatA subunits. Substrates initially bind to the TatABC complex, which probably triggers association of the separate TatA complex to form the active translocon.

The protein resides in the cell inner membrane. Its function is as follows. Part of the twin-arginine translocation (Tat) system that transports large folded proteins containing a characteristic twin-arginine motif in their signal peptide across membranes. TatA could form the protein-conducting channel of the Tat system. In Neisseria gonorrhoeae (strain ATCC 700825 / FA 1090), this protein is Sec-independent protein translocase protein TatA.